The sequence spans 113 residues: MAAQKPVRHSVHVKKGDTVQVIAGKDKGTVGEVLQVFPKTSRVLVKGVNLRTKHVKPRQEGESGQIVVEEASIHSSNVQLYSTTQKVASRVAYTFTEDGRKVRKLKKTGEIID.

It belongs to the universal ribosomal protein uL24 family. Part of the 50S ribosomal subunit.

One of two assembly initiator proteins, it binds directly to the 5'-end of the 23S rRNA, where it nucleates assembly of the 50S subunit. Functionally, one of the proteins that surrounds the polypeptide exit tunnel on the outside of the subunit. This chain is Large ribosomal subunit protein uL24, found in Synechococcus elongatus (strain ATCC 33912 / PCC 7942 / FACHB-805) (Anacystis nidulans R2).